Reading from the N-terminus, the 235-residue chain is Uridylate kinase (235 aa).

8-11 (KLSG) serves as a coordination point for ATP. Gly-49 contributes to the UMP binding site. ATP-binding residues include Gly-50 and Arg-54. UMP is bound at residue 131–138 (TGNPYFST). Residues Asn-159, Tyr-165, and Asp-168 each coordinate ATP.

This sequence belongs to the UMP kinase family. Homohexamer.

Its subcellular location is the cytoplasm. The catalysed reaction is UMP + ATP = UDP + ADP. It functions in the pathway pyrimidine metabolism; CTP biosynthesis via de novo pathway; UDP from UMP (UMPK route): step 1/1. Inhibited by UTP. Functionally, catalyzes the reversible phosphorylation of UMP to UDP. In Mycoplasma pneumoniae (strain ATCC 29342 / M129 / Subtype 1) (Mycoplasmoides pneumoniae), this protein is Uridylate kinase.